The following is a 67-amino-acid chain: Large ribosomal subunit protein bL31 (67 aa).

Zn(2+) contacts are provided by C16, C18, C36, and C39.

Belongs to the bacterial ribosomal protein bL31 family. Type A subfamily. In terms of assembly, part of the 50S ribosomal subunit. Zn(2+) is required as a cofactor.

Functionally, binds the 23S rRNA. In Aliarcobacter butzleri (strain RM4018) (Arcobacter butzleri), this protein is Large ribosomal subunit protein bL31.